The following is a 747-amino-acid chain: DNA repair and recombination protein RAD54-like (747 aa).

Residues 1–42 form a disordered region; it reads MRRSLAPSQLARRKPEDRSSDDEDWQPGTVTPKKRKSSSETQ. Residues 2 to 9 form a required for chromatin remodeling, strand pairing activities and coupling of ATPase activity region; that stretch reads RRSLAPSQ. At Ser38 the chain carries Phosphoserine. Positions 170–345 constitute a Helicase ATP-binding domain; the sequence is SRRIPGSHGC…FSLVHFVNSG (176 aa). 183-190 contributes to the ATP binding site; the sequence is DEMGLGKT. The DEGH box motif lies at 296 to 299; that stretch reads DEGH. In terms of domain architecture, Helicase C-terminal spans 500–653; it reads VLDYILAVTR…CVVDEEQDVE (154 aa). Lys515 carries the post-translational modification N6-acetyllysine. Ser572 is subject to Phosphoserine; by NEK1.

This sequence belongs to the SNF2/RAD54 helicase family. Homohexamer. Interacts (via N-terminus) with RAD51. Interacts with NAP1L1. Interacts with BRD9; this interaction orchestrates RAD51-RAD54 complex formation. Post-translationally, acetylated. Acetylation promotes interaction with BRD9, and subsequently with RAD54, which is essential for homologous recombination (HR). Phosphorylated. Phosphorylation at Ser-572 by NEK1 specifically in G2 phase allows efficient removal of RAD51 filaments from DNA. In terms of tissue distribution, hardly detectable in most tissues. Dramatically increased in thymus, spleen and testis.

Its subcellular location is the nucleus. It carries out the reaction ATP + H2O = ADP + phosphate + H(+). In terms of biological role, plays an essential role in homologous recombination (HR) which is a major pathway for repairing DNA double-strand breaks (DSBs), single-stranded DNA (ssDNA) gaps, and stalled or collapsed replication forks. Acts as a molecular motor during the homology search and guides RAD51 ssDNA along a donor dsDNA thereby changing the homology search from the diffusion-based mechanism to a motor-guided mechanism. Plays also an essential role in RAD51-mediated synaptic complex formation which consists of three strands encased in a protein filament formed once homology is recognized. Once DNA strand exchange occured, dissociates RAD51 from nucleoprotein filaments formed on dsDNA. Deficiency also resulted in an increased frequency of end-to-end chromosome fusions involving telomeres compared to the controls, suggesting a putative role in telomere capping. Non-homologous end joining (NHEJ) and homologous recombination (HR) represent the two major pathways of DNA double-strand break (DSB) repair in eukaryotic cells. LIG4 and RAD54L cooperate to support cellular proliferation, repair spontaneous DSBs, and prevent chromosome and single chromatid aberrations. The protein is DNA repair and recombination protein RAD54-like (Rad54l) of Mus musculus (Mouse).